The sequence spans 606 residues: Envelope glycoprotein gp95 (606 aa).

The first 62 residues, methionine 1–alanine 62, serve as a signal peptide directing secretion. At aspartate 63 to leucine 552 the chain is on the extracellular side. N-linked (GlcNAc...) asparagine; by host glycans are attached at residues asparagine 79, asparagine 120, asparagine 141, asparagine 158, and asparagine 178. 7 cysteine pairs are disulfide-bonded: cysteine 87–cysteine 499, cysteine 121–cysteine 152, cysteine 192–cysteine 245, cysteine 258–cysteine 267, cysteine 353–cysteine 370, cysteine 410–cysteine 446, and cysteine 491–cysteine 498. The segment at isoleucine 185–glutamate 226 is binding to host receptor. N-linked (GlcNAc...) asparagine; by host glycosylation is present at asparagine 257. A binding to host receptor region spans residues valine 261 to lysine 288. Residues asparagine 291, asparagine 297, asparagine 307, and asparagine 315 are each glycosylated (N-linked (GlcNAc...) asparagine; by host). Asparagine 391 is a glycosylation site (N-linked (GlcNAc...) asparagine; by host). Residues glycine 418–leucine 438 form a fusion peptide region. A coiled-coil region spans residues alanine 435–leucine 485. A glycan (N-linked (GlcNAc...) asparagine; by host) is linked at asparagine 453. The segment at leucine 474–glycine 490 is immunosuppression. Asparagine 501 carries N-linked (GlcNAc...) asparagine; by host glycosylation. Positions serine 503–tryptophan 533 form a coiled coil. The chain crosses the membrane as a helical span at residues leucine 553–valine 573. Residues cysteine 565 and cysteine 568 are each lipidated (S-palmitoyl cysteine; by host). Over cysteine 574–valine 606 the chain is Cytoplasmic.

Belongs to the Alpharetroviruses envelope glycoprotein family. In terms of assembly, heterodimer with the transmembrane protein. The mature envelope protein (Env) consists of a trimer of SU-TM heterodimers attached by a labile interchain disulfide bond. Interacts with the host cell entry receptor TVA isoforms pg900 and pg800; this interaction allows the viral attachment. Heterodimer with the surface protein. The mature envelope protein (Env) consists of a trimer of SU-TM heterodimers attached by a labile interchain disulfide bond. Post-translationally, specific enzymatic cleavages in vivo yield mature proteins. Envelope glycoproteins are synthesized as an inactive precursor that is N-glycosylated and processed likely by host cell furin or by a furin-like protease in the Golgi to yield the mature SU and TM proteins. The cleavage site between SU and TM requires the minimal sequence [KR]-X-[KR]-R. The transmembrane protein is palmitoylated. Palmitoylation is necessary for glycoprotein function and infectivity.

It localises to the virion membrane. Its subcellular location is the host cell membrane. The surface protein (SU) attaches the virus to the host cell entry receptor TVA. This interaction triggers the refolding of the transmembrane protein (TM) thereby unmasking its fusion peptide and the formation of a reactive thiolate on Cys-100 to activate its fusogenic potential. Fusion occurs at the host cell plasma membrane. Its function is as follows. The transmembrane protein (TM) acts as a class I viral fusion protein. Under the current model, the protein has at least 3 conformational states: pre-fusion native state, pre-hairpin intermediate state, and post-fusion hairpin state. During viral and target cell membrane fusion, the coiled coil regions (heptad repeats) assume a trimer-of-hairpins structure, positioning the fusion peptide in close proximity to the C-terminal region of the ectodomain. The formation of this structure appears to drive apposition and subsequent fusion of viral and target cell membranes. Membranes fusion leads to delivery of the nucleocapsid into the cytoplasm. This Avian leukosis virus subgroup A (isolate RSA) (ALV-A RSA) protein is Envelope glycoprotein gp95 (env).